The chain runs to 311 residues: Manganese-dependent ADP-ribose/CDP-alcohol diphosphatase (311 aa).

Residues aspartate 17, glutamine 19, aspartate 64, asparagine 99, histidine 218, histidine 255, and histidine 257 each contribute to the Zn(2+) site.

It belongs to the ADPRibase-Mn family. In terms of assembly, monomer. Requires Mg(2+) as cofactor.

It carries out the reaction CDP-choline + H2O = phosphocholine + CMP + 2 H(+). It catalyses the reaction ADP-D-ribose + H2O = D-ribose 5-phosphate + AMP + 2 H(+). The enzyme catalyses CDP-glycerol + H2O = sn-glycerol 3-phosphate + CMP + 2 H(+). Functionally, hydrolyzes ADP-ribose, IDP-ribose, CDP-glycerol, CDP-choline and CDP-ethanolamine, but not other non-reducing ADP-sugars or CDP-glucose. In Arabidopsis thaliana (Mouse-ear cress), this protein is Manganese-dependent ADP-ribose/CDP-alcohol diphosphatase.